Here is a 1040-residue protein sequence, read N- to C-terminus: MMSSVSTESKLQQAVSLQGVDPETCMIVFKNHWAQVVKILEKHDPLKNTQAKYGSIPPDEASAVQNYVEHMLFLLIEEQAKDAAMGPILEFVVSENIMEKLFLWSLRREFTDETKIEQLKMYEMLVTQSHQPLLHHKPILKPLMMLLSSCSGTTTPTVEEKLVVLLNQLCSILAKDPSILELFFHTSEDQGAANFLIFSLLIPFIHREGSVGQQARDALLFIMSLSAENTMVAHHIVENTYFCPVLATGLSGLYSSLPTKLEEKGEEWHCLLKDDWLLLPSLVQFMNSLEFCNAVIQVAHPLIRNQLVNYIYNGFLVPVLAPALHKVTVEEVMTTTAYLDLFLRSISEPALLEIFLRFILLHQHENVHILDTLTSRINTPFRLCVVSLALFRTLIGLHCEDVMLQLVLRYLIPCNHMMLSQRWAVKERDCYSVSAAKLLALTPVCCSSGITLTLGNQERDYILWSKCMHDTSGPVERPFPEAFSESACIVEYGKALDISYLQYLWEAHTNILRCMRDCRVWSALYDGDSPDPEMFLQSLTEEGSVSSACPVFGLPQQLPRKTGPQLAPRKDKSQTELEWDDSYDTGISSGADVGSPGPYDDLEVSGPPAPIDPPKHIQEMKKNALLLFKGSYIEESDFQDDVMVYRLCAEKDSEDMKDSQEEAARPPAEAQAEVQSVPINNGPLLSTQPETDSEEEWNRDNSDPFHSEPKEPKQEREPEAAPESNSELASPAPEAEHSSNLTAAHPESEELIAQYDQIIKELDSGAEGLMEQNYPTPDPLLLTKEEEGKEESKGEKEKEGKKELEDEEDDFDSFIAEMPAVETVPSPFVGRDEAAFASRHPVRTQSTPFTGPFISVVLSKLENMLENSLHVNLLLIGIITQLASYPQPLLRSFLLNTNMVFQPSVRSLYQVLASVKNKIEQFASVERDFPGLLIQAQQYLLFRVDMSDMTPAALTKDPIQEASRTGSGKNLLDGPPRVLQPFLTHRTKVAEAPPNLPLPVRNPMLAAALFPEFLKELAALAQEHSILCYKILGDFEDSCC.

3 disordered regions span residues 555–613, 653–746, and 769–808; these read PQQL…PIDP, SEDM…AAHP, and LMEQ…EDEE. A compositionally biased stretch (basic and acidic residues) spans 653 to 664; the sequence is SEDMKDSQEEAA. Polar residues predominate over residues 677-690; that stretch reads VPINNGPLLSTQPE. 2 stretches are compositionally biased toward basic and acidic residues: residues 696–719 and 783–804; these read EWNR…REPE and TKEE…KKEL.

It belongs to the FHIP family. May be a component of the FTS/Hook/FHIP complex (FHF complex), composed of AKTIP/FTS, FHIP1B, and one or more members of the Hook family of proteins HOOK1, HOOK2, and HOOK3. May interact directly with AKTIP/FTS.

In terms of biological role, probable component of the FTS/Hook/FHIP complex (FHF complex). FHF complex promotes the distribution of AP-4 complex to the perinuclear area of the cell. The sequence is that of FHF complex subunit HOOK-interacting protein 1A from Homo sapiens (Human).